Reading from the N-terminus, the 524-residue chain is Caffeate CoA-transferase (524 aa).

Glutamate 323 (5-glutamyl coenzyme A thioester intermediate) is an active-site residue.

The protein belongs to the 3-oxoacid CoA-transferase family. Homodimer.

It carries out the reaction hydrocaffeoyl-CoA + (E)-caffeate = 3-(3,4-dihydroxyphenyl)propanoate + (E)-caffeoyl-CoA. Functionally, involved in caffeate respiration, which consists in the reduction of the C-C double bond of caffeate. CarA catalyzes an energy-saving CoA loop for caffeate activation in the steady state of caffeate respiration. It catalyzes the formation of caffeyl-CoA from caffeate with hydrocaffeyl-CoA as the CoA donor via a ping-pong mechanism. In addition to caffeate, the enzyme can utilize 4-coumarate or ferulate as CoA acceptor. Neither acetyl-CoA nor butyryl-CoA served as the CoA donor. The protein is Caffeate CoA-transferase of Acetobacterium woodii.